Reading from the N-terminus, the 104-residue chain is Small ribosomal subunit protein bS6c (104 aa).

The protein belongs to the bacterial ribosomal protein bS6 family.

Its subcellular location is the plastid. The protein resides in the cyanelle. Binds together with bS18 to 16S ribosomal RNA. This is Small ribosomal subunit protein bS6c (rps6) from Cyanophora paradoxa.